The primary structure comprises 182 residues: Putative colanic acid biosynthesis acetyltransferase WcaF (182 aa).

The protein belongs to the transferase hexapeptide repeat family.

The protein operates within slime biogenesis; slime polysaccharide biosynthesis. In Shigella flexneri, this protein is Putative colanic acid biosynthesis acetyltransferase WcaF (wcaF).